Reading from the N-terminus, the 662-residue chain is Glycine--tRNA ligase beta subunit (662 aa).

It belongs to the class-II aminoacyl-tRNA synthetase family. In terms of assembly, tetramer of two alpha and two beta subunits.

The protein resides in the cytoplasm. It carries out the reaction tRNA(Gly) + glycine + ATP = glycyl-tRNA(Gly) + AMP + diphosphate. The polypeptide is Glycine--tRNA ligase beta subunit (Rickettsia akari (strain Hartford)).